A 337-amino-acid polypeptide reads, in one-letter code: Large ribosomal subunit protein uL3 (337 aa).

Residues 1–29 (MARHHQPRKGSVAFSPRKRAARETPRVKS) are disordered.

It belongs to the universal ribosomal protein uL3 family. As to quaternary structure, part of the 50S ribosomal subunit. Forms a cluster with proteins L14 and L24e.

Functionally, one of the primary rRNA binding proteins, it binds directly near the 3'-end of the 23S rRNA, where it nucleates assembly of the 50S subunit. This chain is Large ribosomal subunit protein uL3, found in Methanothermobacter thermautotrophicus (strain ATCC 29096 / DSM 1053 / JCM 10044 / NBRC 100330 / Delta H) (Methanobacterium thermoautotrophicum).